Reading from the N-terminus, the 471-residue chain is MAVEISETLTFECETGNYHTFCPISCVAWLYQKIEDSFFLVVGTKTCGYFSQNSLGVMIFAEPRYAMAELEEGDIPAQLNDYGESKRLCIQIIKNRNPSVIIWIGTCTTEIIKMDLEGIAPKLEAEIGVPIVVARANGLDYAFTQGEDTVLAAVTHRCPERKSSVGGQNQPVQDEELQEFFSFLPPNDENVKKTVVGSQKNPPLVLFGSLPSAVAHQPSSELKRQSIQISGWIPTERYNNLPSLGDEVYVCGVNPFLSRTATSLMRRRKCQLIGAPFPIGPDGTRAWIEKICSVFGIEAQGLEKREKKVWDSLENYLDQVRGKSVFFMGDNPLEISLARFLIRCGMTVYEIGIPYMDKRYQAAELYFLQNTCRDMRIPMPRIVEKPDNYNQLQRMYELQPDLVFTGMAHANPLQARGINTRWSIEFTFAQIHGFTNAKEILKLIIRPLKDNNDFKNFDWTNLVRKDNNSLN.

Residues Cys22, Cys47, and Cys107 each contribute to the [4Fe-4S] cluster site.

Belongs to the BchN/ChlN family. Protochlorophyllide reductase is composed of three subunits; ChlL, ChlN and ChlB. Forms a heterotetramer of two ChlB and two ChlN subunits. The cofactor is [4Fe-4S] cluster.

The protein resides in the plastid. It localises to the chloroplast. The catalysed reaction is chlorophyllide a + oxidized 2[4Fe-4S]-[ferredoxin] + 2 ADP + 2 phosphate = protochlorophyllide a + reduced 2[4Fe-4S]-[ferredoxin] + 2 ATP + 2 H2O. It participates in porphyrin-containing compound metabolism; chlorophyll biosynthesis (light-independent). Its function is as follows. Component of the dark-operative protochlorophyllide reductase (DPOR) that uses Mg-ATP and reduced ferredoxin to reduce ring D of protochlorophyllide (Pchlide) to form chlorophyllide a (Chlide). This reaction is light-independent. The NB-protein (ChlN-ChlB) is the catalytic component of the complex. This is Light-independent protochlorophyllide reductase subunit N from Huperzia lucidula (Shining clubmoss).